A 506-amino-acid chain; its full sequence is Cytochrome P450 monooxygenase tpcB (506 aa).

Position 450 (Cys-450) interacts with heme.

Belongs to the cytochrome P450 family. The cofactor is heme.

Its pathway is secondary metabolite biosynthesis; terpenoid biosynthesis. Cytochrome P450 monooxygenase; part of the gene cluster that mediates the biosynthesis of terpestacin. The bifunctional terpene synthase tpcA converts isopentenyl diphosphate (IPP) and dimethylallyl diphosphate (DMAPP) into the sesterterpene preterpestacin I. The C-terminal prenyltransferase (PT) domain of tpcA catalyzes formation of GFPP, whereas the N-terminal terpene cyclase (TC) domain catalyzes the cyclization of GFPP into preterpestacin I. The cytochrome P450 monooxygenase tpcB then hydroxylates preterpestacin I to yield 24-hydroxypreterpstacin I (renamed as preterpestacin II) whereas the cytochrome P450 monooxygenase tpcC further hydroxylates preterpestacin II to yield 16,17-dihydroxypreterpestacin II (renamed as preterpestacin III). Finally, the FAD-dependent monooxygenase tpcD converts preterpestacin III into terpestacin. The sequence is that of Cytochrome P450 monooxygenase tpcB from Cochliobolus heterostrophus (strain C5 / ATCC 48332 / race O) (Southern corn leaf blight fungus).